The chain runs to 743 residues: ABC-type transporter claG (743 aa).

N-linked (GlcNAc...) asparagine glycans are attached at residues N4 and N30. A helical membrane pass occupies residues 124-144 (SILLDIFLVIVVSWPFPFAWI). N159 carries N-linked (GlcNAc...) asparagine glycosylation. Residues 200 to 439 (VEFSGISMRP…FQDAGYTFPL (240 aa)) enclose the ABC transporter domain. 234-241 (GPSGSGKS) contacts ATP. The next 5 helical transmembrane spans lie at 507 to 527 (YPSF…IGLS), 560 to 580 (GMLL…KTFG), 611 to 631 (IFLS…PIVS), 636 to 656 (LIVN…ISAI), and 661 to 681 (NGPL…GCAP).

Belongs to the ABC transporter superfamily. ABCG family.

The protein resides in the membrane. Its function is as follows. ABC-type transporter; part of the cla gene cluster that produces clavatol and ortho-quinone methide. The clavatol biosynthesis cluster cla and the terrestric acid cluster tra are both involved in the production of peniphenones and penilactones. This Penicillium crustosum (Blue mold fungus) protein is ABC-type transporter claG.